The sequence spans 317 residues: Olfactory receptor 6P1 (317 aa).

The Extracellular portion of the chain corresponds to 1-25 (MRNLSGGHVEEFVLVGFPTTPPLQL). Asparagine 3 carries an N-linked (GlcNAc...) asparagine glycan. The chain crosses the membrane as a helical span at residues 26-46 (LLFVLFFAIYLLTLLENALIV). Residues 47 to 54 (FTIWLAPS) are Cytoplasmic-facing. Residues 55-75 (LHRPMYFFLGHLSFLELWYIN) traverse the membrane as a helical segment. Topologically, residues 76-99 (VTIPRLLAAFLTQDGRVSYVGCMT) are extracellular. Residues cysteine 97 and cysteine 189 are joined by a disulfide bond. The chain crosses the membrane as a helical span at residues 100–120 (QLYFFIALACTECVLLAVMAY). The Cytoplasmic portion of the chain corresponds to 121 to 139 (DRYLAICGPLLYPSLMPSS). The helical transmembrane segment at 140-160 (LATRLAAASWGSGFFSSMMKL) threads the bilayer. Topologically, residues 161–197 (LFISQLSYCGPNIINHFFCDISPLLNLTCSDKEQAEL) are extracellular. Residue asparagine 186 is glycosylated (N-linked (GlcNAc...) asparagine). The chain crosses the membrane as a helical span at residues 198–217 (VDFLLALVMILLPLLAVVSS). The Cytoplasmic segment spans residues 218–237 (YTAIIAAILRIPTSRGRHKA). The helical transmembrane segment at 238–258 (FSTCAAHLAVVVIYYSSTLFT) threads the bilayer. Residues 259-271 (YARPRAMYTFNHN) lie on the Extracellular side of the membrane. A helical transmembrane segment spans residues 272–292 (KIISVLYTIIVPFFNPAIYCL). At 293–317 (RNKEVKEAFRKTVMGRCHYPRDVQD) the chain is on the cytoplasmic side.

The protein belongs to the G-protein coupled receptor 1 family.

It localises to the cell membrane. Functionally, odorant receptor. This is Olfactory receptor 6P1 (OR6P1) from Homo sapiens (Human).